The chain runs to 969 residues: Surface protein P113 (969 aa).

An N-terminal signal peptide occupies residues 1–22 (MKIPFFILHILLLQFLLCLIRC). N207 carries N-linked (GlcNAc...) asparagine glycosylation. The tract at residues 223 to 328 (IGDESTDSSS…TDTLVNNKEN (106 aa)) is disordered. The span at 229–241 (DSSSMEIQDSTSN) shows a compositional bias: polar residues. An N-linked (GlcNAc...) asparagine glycan is attached at N268. The span at 300-311 (KNEDNKDLEHGS) shows a compositional bias: basic and acidic residues. The span at 312–325 (SNDVNNNTDTLVNN) shows a compositional bias: low complexity. 4 N-linked (GlcNAc...) asparagine glycosylation sites follow: N317, N360, N661, and N697. A compositionally biased stretch (polar residues) spans 688 to 705 (SSNFNIFDSNNTDQNNEQ). The segment at 688-947 (SSNFNIFDSN…NETNKTDNGS (260 aa)) is disordered. The segment covering 713 to 727 (QLLNNNNDDVLSESN) has biased composition (low complexity). Basic and acidic residues predominate over residues 728–749 (NENKEKTSDDATHKETQEKSDQ). N779 carries N-linked (GlcNAc...) asparagine glycosylation. The segment covering 798 to 811 (EGTEELQQNDEDAE) has biased composition (acidic residues). The span at 812 to 822 (SLTKENSKSEE) shows a compositional bias: basic and acidic residues. Positions 823 to 841 (QENEDSTDAEAIDKEEVET) are enriched in acidic residues. Basic and acidic residues predominate over residues 842 to 854 (EEKGKDEQKKDEQ). Residues 855 to 864 (KEQDEEEDGE) are compositionally biased toward acidic residues. A glycan (N-linked (GlcNAc...) asparagine) is linked at N876. The segment covering 883–896 (EENKNEVKGEEHLQ) has biased composition (basic and acidic residues). Low complexity predominate over residues 897–907 (GSEQSIEASES). Positions 908-917 (SQKDETKETE) are enriched in basic and acidic residues. The segment covering 918–936 (DKEEYVNANDDESSEEDTT) has biased composition (acidic residues). Positions 937–947 (PNETNKTDNGS) are enriched in polar residues. Residues N938, N941, and N945 are each glycosylated (N-linked (GlcNAc...) asparagine). The GPI-anchor amidated asparagine moiety is linked to residue N945. Positions 946-969 (GSSFFFAMSNALLVILLLLFIEFL) are cleaved as a propeptide — removed in mature form.

In terms of assembly, forms a complex composed of RH5, P113 and human BSG/basigin; the complex bridges the merozoite and host erythrocyte membranes. Within the complex, interacts with RH5 (via N-terminus); the interaction tethers RH5 to the merozoite membrane.

The protein localises to the cell membrane. In terms of biological role, membrane receptor which tethers secreted RH5 to the merozoite membrane during merozoite invasion of host erythocytes. In Plasmodium falciparum (isolate 3D7), this protein is Surface protein P113.